We begin with the raw amino-acid sequence, 205 residues long: Small ribosomal subunit protein uS4 (205 aa).

A disordered region spans residues 1–46 (MSKRASSKYKIDRRMGENIWGRPKSPVNRREYGPGQHGQRRKGKLS). The 61-residue stretch at 94-154 (SRLDAIVYRA…QKSKQLAIVL (61 aa)) folds into the S4 RNA-binding domain.

The protein belongs to the universal ribosomal protein uS4 family. As to quaternary structure, part of the 30S ribosomal subunit. Contacts protein S5. The interaction surface between S4 and S5 is involved in control of translational fidelity.

In terms of biological role, one of the primary rRNA binding proteins, it binds directly to 16S rRNA where it nucleates assembly of the body of the 30S subunit. With S5 and S12 plays an important role in translational accuracy. This is Small ribosomal subunit protein uS4 from Allorhizobium ampelinum (strain ATCC BAA-846 / DSM 112012 / S4) (Agrobacterium vitis (strain S4)).